Consider the following 340-residue polypeptide: Adenosine kinase (340 aa).

D292 is a catalytic residue.

Belongs to the carbohydrate kinase PfkB family. Mg(2+) is required as a cofactor.

The catalysed reaction is adenosine + ATP = AMP + ADP + H(+). The protein operates within purine metabolism; AMP biosynthesis via salvage pathway; AMP from adenosine: step 1/1. In Schizosaccharomyces pombe (strain 972 / ATCC 24843) (Fission yeast), this protein is Adenosine kinase (ado1).